Here is a 751-residue protein sequence, read N- to C-terminus: Large T antigen (751 aa).

An N-acetylmethionine; by host modification is found at methionine 1. Positions 12 to 75 (ALISLLDLEP…LYRVRLLLGP (64 aa)) constitute a J domain. Positions 130 to 134 (LTCQE) are binding to host RB1 protein and transforming activity. The segment covering 133 to 143 (QEELSSSEDEF) has biased composition (acidic residues). A disordered region spans residues 133 to 260 (QEELSSSEDE…PKKPPPTVSP (128 aa)). Residues 155–165 (VSISSDSSSSS) show a composition bias toward low complexity. The span at 219-232 (RESQSTFGSYFNST) shows a compositional bias: polar residues. The residue at position 245 (serine 245) is a Phosphoserine; by host. Residue threonine 249 is modified to Phosphothreonine; by host. The Nuclear localization signal motif lies at 251 to 257 (PKKPPPT). The segment at residues 264–380 (PTILRGFLSH…KENKPGLYHF (117 aa)) is a DNA-binding region (T-ag OBD). The segment at 389-483 (VKQIDWNFLT…RRLKVLESTR (95 aa)) adopts a T-ag D1-type zinc-finger fold. Residues cysteine 426, cysteine 429, histidine 439, and histidine 443 each contribute to the Zn(2+) site. Positions 522-682 (DFEMMLLDIL…DFLAKSLEEN (161 aa)) constitute an SF3 helicase domain. 548-555 (GPVNSGKT) provides a ligand contact to ATP.

As to quaternary structure, forms homohexamers in the presence of ATP. Interacts with host HDAC1. Interacts (via LXCXE domain) with host RB1; the interaction induces the aberrant dissociation of RB1-E2F1 complex thereby disrupting RB1's activity. Interacts (via LXCXE domain) with host pRB-related proteins RBL1 and RBL2. Interacts (via C-terminus) with host TOP1 and POLA1 allowing DNA replication. Interacts with host preinitiation complex components TBP, TFIIA and TFIID to regulate transcription initiation. Mg(2+) is required as a cofactor. Phosphorylated on both serine and threonine residues. Small t antigen inhibits the dephosphorylation by the AC form of PP2A. In terms of processing, O-Glycosylated near the C-terminal region. Post-translationally, acetylated by CBP in a TP53-dependent manner.

Its subcellular location is the host nucleus. It carries out the reaction Couples ATP hydrolysis with the unwinding of duplex DNA by translocating in the 3'-5' direction.. The catalysed reaction is ATP + H2O = ADP + phosphate + H(+). Functionally, isoform large T antigen is a key early protein essential for both driving viral replication and inducing cellular transformation. Plays a role in viral genome replication by driving entry of quiescent cells into the cell cycle and by autoregulating the synthesis of viral early mRNA. Displays highly oncogenic activities by corrupting the host cellular checkpoint mechanisms that guard cell division and the transcription, replication, and repair of DNA. Participates in the modulation of cellular gene expression preceeding viral DNA replication. This step involves binding to host key cell cycle regulators retinoblastoma protein RB1/pRb and TP53. Induces the disassembly of host E2F1 transcription factors from RB1, thus promoting transcriptional activation of E2F1-regulated S-phase genes. Inhibits host TP53 binding to DNA, abrogating the ability of TP53 to stimulate gene expression. Plays the role of a TFIID-associated factor (TAF) in transcription initiation for all three RNA polymerases, by stabilizing the TBP-TFIIA complex on promoters. Initiates viral DNA replication and unwinding via interactions with the viral origin of replication. Binds two adjacent sites in the SV40 origin. The replication fork movement is facilitated by Large T antigen helicase activity. Has processive 3'-5' DNA helicase activity which requires a short 3' single-stranded region and ATP. Activates the transcription of viral late mRNA, through host TBP and TFIIA stabilization. Interferes with histone deacetylation mediated by HDAC1, leading to activation of transcription. The protein is Large T antigen of Mesocricetus auratus (Golden hamster).